The following is a 201-amino-acid chain: Probable chemoreceptor glutamine deamidase CheD 1 (201 aa).

This sequence belongs to the CheD family.

The enzyme catalyses L-glutaminyl-[protein] + H2O = L-glutamyl-[protein] + NH4(+). Functionally, probably deamidates glutamine residues to glutamate on methyl-accepting chemotaxis receptors (MCPs), playing an important role in chemotaxis. This Geobacter sulfurreducens (strain ATCC 51573 / DSM 12127 / PCA) protein is Probable chemoreceptor glutamine deamidase CheD 1.